Consider the following 194-residue polypeptide: dCTP deaminase (194 aa).

DCTP is bound by residues Arg110–Arg115, Asp128, Val136–Glu138, Tyr171, Lys178, and Gln182. The active-site Proton donor/acceptor is the Glu138.

This sequence belongs to the dCTP deaminase family. In terms of assembly, homotrimer.

It carries out the reaction dCTP + H2O + H(+) = dUTP + NH4(+). It participates in pyrimidine metabolism; dUMP biosynthesis; dUMP from dCTP (dUTP route): step 1/2. Catalyzes the deamination of dCTP to dUTP. The chain is dCTP deaminase from Pasteurella multocida (strain Pm70).